A 127-amino-acid chain; its full sequence is Glycine cleavage system H protein (127 aa).

Residues T24–K105 enclose the Lipoyl-binding domain. The residue at position 65 (K65) is an N6-lipoyllysine.

This sequence belongs to the GcvH family. As to quaternary structure, the glycine cleavage system is composed of four proteins: P, T, L and H. (R)-lipoate serves as cofactor.

Its function is as follows. The glycine cleavage system catalyzes the degradation of glycine. The H protein shuttles the methylamine group of glycine from the P protein to the T protein. The polypeptide is Glycine cleavage system H protein (Azoarcus sp. (strain BH72)).